The primary structure comprises 515 residues: 1-pyrroline-5-carboxylate dehydrogenase (515 aa).

Catalysis depends on residues Glu-286 and Cys-320.

Belongs to the aldehyde dehydrogenase family. RocA subfamily.

The catalysed reaction is L-glutamate 5-semialdehyde + NAD(+) + H2O = L-glutamate + NADH + 2 H(+). It participates in amino-acid degradation; L-proline degradation into L-glutamate; L-glutamate from L-proline: step 2/2. The polypeptide is 1-pyrroline-5-carboxylate dehydrogenase (Bacillus mycoides (strain KBAB4) (Bacillus weihenstephanensis)).